We begin with the raw amino-acid sequence, 414 residues long: Putative transporter AmpG 4 (414 aa).

The next 12 helical transmembrane spans lie at isoleucine 15–valine 35, isoleucine 44–tryptophan 63, tryptophan 84–proline 104, threonine 109–valine 129, valine 150–isoleucine 170, leucine 177–asparagine 197, phenylalanine 230–alanine 250, isoleucine 268–valine 288, phenylalanine 295–leucine 315, alanine 324–valine 344, tyrosine 360–glycine 379, and glycine 389–asparagine 409.

Belongs to the major facilitator superfamily.

The protein localises to the cell inner membrane. The protein is Putative transporter AmpG 4 (ampG4) of Rickettsia felis (strain ATCC VR-1525 / URRWXCal2) (Rickettsia azadi).